The chain runs to 244 residues: 5-oxoprolinase subunit A (244 aa).

This sequence belongs to the LamB/PxpA family. As to quaternary structure, forms a complex composed of PxpA, PxpB and PxpC.

It carries out the reaction 5-oxo-L-proline + ATP + 2 H2O = L-glutamate + ADP + phosphate + H(+). Its function is as follows. Catalyzes the cleavage of 5-oxoproline to form L-glutamate coupled to the hydrolysis of ATP to ADP and inorganic phosphate. The polypeptide is 5-oxoprolinase subunit A (Escherichia coli (strain K12)).